Here is a 292-residue protein sequence, read N- to C-terminus: Elongation factor Ts (292 aa).

Residues 82–85 (TDFV) are involved in Mg(2+) ion dislocation from EF-Tu.

The protein belongs to the EF-Ts family.

The protein localises to the cytoplasm. Functionally, associates with the EF-Tu.GDP complex and induces the exchange of GDP to GTP. It remains bound to the aminoacyl-tRNA.EF-Tu.GTP complex up to the GTP hydrolysis stage on the ribosome. The sequence is that of Elongation factor Ts from Bordetella petrii (strain ATCC BAA-461 / DSM 12804 / CCUG 43448).